The sequence spans 428 residues: MAGSLFADASKRLEKALKYVAISDDAGERLKYPKTSLSVSIPVRMDDGSLKIFPGYRVRYDDTRGPGKGGVRYHPNVTMDEVQSLAFWMTFKCALLNLPFGGAKGGITLNPKELSRAELERLSRGYIEAIADFIGPDIDILAPDVYTNEMMMGWMMDQYSIIRRKISPAVVTGKPVTMGGSQGRNTATGTGAFYIMQGMLPKFDQYPENTTVAVQGFGNAGMVVAECLYQDGYKVVAISDSQGGIYNEQGIDIPAVIDYKQRHRTLAGMYCDQAICDLGENQQISNAELLALDVDVLIPAALENQITRDNADQVRARYIFEVANGPTTTAADDILASKGIYVFPDILVNAGGVTVSYFEWVQNRSGLYWSAKEVNDRLKEKMVEEAEHVWNITQELDVNVRTAAYIHALNRLSEAMDAKGTRDYYQDS.

Substrate contacts are provided by K68 and K92. The active-site Proton donor is K104. T188 and N219 together coordinate NADP(+). S356 is a substrate binding site.

The protein belongs to the Glu/Leu/Phe/Val dehydrogenases family. As to quaternary structure, homohexamer.

The catalysed reaction is L-glutamate + NADP(+) + H2O = 2-oxoglutarate + NH4(+) + NADPH + H(+). Its function is as follows. Catalyzes the reversible oxidative deamination of glutamate to alpha-ketoglutarate and ammonia. The chain is NADP-specific glutamate dehydrogenase (gdhA) from Synechocystis sp. (strain ATCC 27184 / PCC 6803 / Kazusa).